A 112-amino-acid polypeptide reads, in one-letter code: uncharacterized protein (112 aa).

Transmembrane regions (helical) follow at residues 33 to 53 (IIGI…MIIF) and 69 to 89 (MNNI…HITV).

Its subcellular location is the membrane. This is an uncharacterized protein from Saccharomyces cerevisiae (strain ATCC 204508 / S288c) (Baker's yeast).